The sequence spans 907 residues: Translation initiation factor IF-2 (907 aa).

Residues Asp-26–Asp-317 form a disordered region. Basic and acidic residues-rich tracts occupy residues Gly-28–Lys-44 and Ser-101–Tyr-248. Positions Lys-299–Lys-308 are enriched in basic residues. A tr-type G domain is found at Pro-406 to Thr-575. Residues Gly-415–Thr-422 form a G1 region. Gly-415–Thr-422 is a binding site for GTP. Residues Gly-440 to His-444 are G2. The interval Asp-461 to Gly-464 is G3. GTP contacts are provided by residues Asp-461–His-465 and Asn-515–Asp-518. The interval Asn-515 to Asp-518 is G4. The interval Ser-551 to Lys-553 is G5.

The protein belongs to the TRAFAC class translation factor GTPase superfamily. Classic translation factor GTPase family. IF-2 subfamily.

Its subcellular location is the cytoplasm. Its function is as follows. One of the essential components for the initiation of protein synthesis. Protects formylmethionyl-tRNA from spontaneous hydrolysis and promotes its binding to the 30S ribosomal subunits. Also involved in the hydrolysis of GTP during the formation of the 70S ribosomal complex. This Vibrio vulnificus (strain YJ016) protein is Translation initiation factor IF-2.